Consider the following 190-residue polypeptide: Putative 3-methyladenine DNA glycosylase (190 aa).

This sequence belongs to the DNA glycosylase MPG family.

This is Putative 3-methyladenine DNA glycosylase from Rubrobacter xylanophilus (strain DSM 9941 / JCM 11954 / NBRC 16129 / PRD-1).